Here is a 152-residue protein sequence, read N- to C-terminus: Methylglyoxal synthase (152 aa).

An MGS-like domain is found at 1 to 152; the sequence is MELTTRTIAA…YDRYLQQRLK (152 aa). Substrate is bound by residues His19, Lys23, 45–48, and 65–66; these read TGTT and SG. Asp71 functions as the Proton donor/acceptor in the catalytic mechanism. Position 98 (His98) interacts with substrate.

The protein belongs to the methylglyoxal synthase family.

The catalysed reaction is dihydroxyacetone phosphate = methylglyoxal + phosphate. Functionally, catalyzes the formation of methylglyoxal from dihydroxyacetone phosphate. The sequence is that of Methylglyoxal synthase from Yersinia enterocolitica serotype O:8 / biotype 1B (strain NCTC 13174 / 8081).